Here is a 1553-residue protein sequence, read N- to C-terminus: Pre-mRNA cleavage complex 2 protein Pcf11 (1553 aa).

The residue at position 2 (Ser2) is an N-acetylserine. Positions 14–142 (AREDACRDYQ…ALDVRVNSLD (129 aa)) constitute a CID domain. A Phosphoserine modification is found at Ser120. Residue Thr121 is modified to Phosphothreonine. The disordered stretch occupies residues 167–186 (NKSPDEPSTPGTVVSSPSIS). Phosphoserine occurs at positions 169 and 182. Over residues 174-186 (STPGTVVSSPSIS) the composition is skewed to low complexity. A coiled-coil region spans residues 208–235 (LLAKQKQLLELQQKKLELELEQAKAQLA). The segment at 265 to 648 (AVKTPHQVPV…KQQHRLSVDA (384 aa)) is disordered. Residue Lys291 forms a Glycyl lysine isopeptide (Lys-Gly) (interchain with G-Cter in SUMO2) linkage. Residues 308-318 (HGKEQSHRKEF) show a composition bias toward basic and acidic residues. A compositionally biased stretch (polar residues) spans 321-342 (NTINQSDIKTSKNVPSEKLNSS). Lys329 is covalently cross-linked (Glycyl lysine isopeptide (Lys-Gly) (interchain with G-Cter in SUMO2)). Basic and acidic residues-rich tracts occupy residues 343–365 (KQEKSKSGERITKKELDQLDSKS), 381–422 (HTKD…DVKE), and 428–443 (EKKEKDEHMKSSEHRV). Lys457 participates in a covalent cross-link: Glycyl lysine isopeptide (Lys-Gly) (interchain with G-Cter in SUMO2). Residues 476–487 (STRKRSRSRSPK) show a composition bias toward basic residues. Residues Ser490, Ser495, Ser510, and Ser512 each carry the phosphoserine modification. Residues 495–509 (SPKRRDRRSPKRRQR) are compositionally biased toward basic residues. 2 stretches are compositionally biased toward basic and acidic residues: residues 530 to 568 (SHMEEFPPPSREERNIKRSAKQDVRDPRRLKKMDEDRPQ) and 600 to 616 (SGWEENKSLQQGDEHSK). Ser645 carries the phosphoserine modification. Lys654 participates in a covalent cross-link: Glycyl lysine isopeptide (Lys-Gly) (interchain with G-Cter in SUMO2). Ser705 is subject to Phosphoserine. The disordered stretch occupies residues 707 to 733 (FNDRFPLKRPRYEDSDKPFVDGPASRF). The segment covering 716-725 (PRYEDSDKPF) has biased composition (basic and acidic residues). A Glycyl lysine isopeptide (Lys-Gly) (interchain with G-Cter in SUMO2) cross-link involves residue Lys723. Ser777 carries the phosphoserine modification. Thr785 carries the post-translational modification Phosphothreonine. Ser794 is subject to Phosphoserine. Arg805, Arg820, and Arg833 each carry asymmetric dimethylarginine. Ser851 is modified (phosphoserine). Positions 921 to 940 (HGPSGAAIRFDGPHGQPGGG) are disordered. Arg929, Arg944, Arg957, Arg982, Arg995, Arg1008, Arg1092, and Arg1103 each carry asymmetric dimethylarginine. Residue Lys1276 forms a Glycyl lysine isopeptide (Lys-Gly) (interchain with G-Cter in SUMO2) linkage. Residues 1286-1313 (DSATAQVTEAVAQPPPEEDEDQNEDQDV) are disordered. Acidic residues predominate over residues 1301 to 1313 (PEEDEDQNEDQDV). Residues Lys1417, Lys1509, Lys1522, and Lys1544 each participate in a glycyl lysine isopeptide (Lys-Gly) (interchain with G-Cter in SUMO2) cross-link. Residues 1516–1553 (CESPKVKEEQIDAPPACSEESVATPTEIKTESDTVESV) are disordered.

Associates with the phosphorylated CTD domain of POLR2A /RNA polymerase II. Post-translationally, phosphorylation at Ser-120 and/or Thr-121 by WNK1 weakens its association with POLR2A/RNA polymerase II, promoting transcript release from the chromatin template and mRNA export to the cytoplasm.

It is found in the nucleus. Functionally, component of pre-mRNA cleavage complex II, which promotes transcription termination by RNA polymerase II. The chain is Pre-mRNA cleavage complex 2 protein Pcf11 from Mus musculus (Mouse).